Here is a 197-residue protein sequence, read N- to C-terminus: Isopentenyl-diphosphate Delta-isomerase (197 aa).

Positions 41 and 48 each coordinate Mn(2+). Residues 46–183 enclose the Nudix hydrolase domain; the sequence is QLHRAFSVFL…AWFMTVLDAA (138 aa). C83 is a catalytic residue. H85 lines the Mn(2+) pocket. Position 103 (E103) interacts with Mg(2+). Residues E130 and E132 each contribute to the Mn(2+) site. Residue E132 is part of the active site.

Belongs to the IPP isomerase type 1 family. Requires Mg(2+) as cofactor. Mn(2+) serves as cofactor.

Its subcellular location is the cytoplasm. It carries out the reaction isopentenyl diphosphate = dimethylallyl diphosphate. The protein operates within isoprenoid biosynthesis; dimethylallyl diphosphate biosynthesis; dimethylallyl diphosphate from isopentenyl diphosphate: step 1/1. In terms of biological role, catalyzes the 1,3-allylic rearrangement of the homoallylic substrate isopentenyl (IPP) to its highly electrophilic allylic isomer, dimethylallyl diphosphate (DMAPP). The sequence is that of Isopentenyl-diphosphate Delta-isomerase from Streptomyces griseus subsp. griseus (strain JCM 4626 / CBS 651.72 / NBRC 13350 / KCC S-0626 / ISP 5235).